The chain runs to 519 residues: MGQLKQLAGILALASPAIAAFSVYALHDPDALKASLGVTSECLSALNYTVECDGPSAVRATKNSDNDPWSMDDLTTLCTDGCSKSLSTWFDAVEQKCEGEEVTINGLVVDPKAFPMKYISGYDLACLRDSNDNWCFYEAQDWDSGVFTSWDKKQPDACSGENPPADCDKKGSEEDVDTLYVTNSYDKELYCSECFMLLWRQRIESPVFPQGNLLDHFTKQFSKLEAACSTKLPLTTPAPTVVLGAKDTLPPATGYHTDGSTVFRYSSPPAPTITTEEPIAKRTAAPRAMKTFYTPATPDRTPQLGAMAPCGKYYNVVAGDTCASISSEFEVTMDELLTYNPELHPNCENLWANFAICVAPVSPNPMTVDGSCGENNAGATCDGSPFGSCCNNEGRCVPCGPEATAAPDAPDAQGQTVHDDEPPEEPHIEEPPKDIPAGDDDDRKKAKLPLPSGKYPLPSNSTMISKDGSCNEYISCVGSPFGVCCSTSGWCGYGKPWCGVGNCVSGYCDTEDKASGKPQ.

The N-terminal stretch at Met1 to Ala19 is a signal peptide. A glycan (N-linked (GlcNAc...) asparagine) is linked at Asn47. A LysM domain is found at Lys312 to Val358. Residues Tyr314–Val358 form a lysM domain region. The span at Pro407–Thr416 shows a compositional bias: low complexity. Residues Pro407 to Pro458 are disordered. A compositionally biased stretch (basic and acidic residues) spans Val417–Lys433. Asn460 carries an N-linked (GlcNAc...) asparagine glycan. The 44-residue stretch at Asp467–Thr510 folds into the Chitin-binding type-1 domain. Cystine bridges form between Cys470/Cys485, Cys476/Cys491, Cys484/Cys498, and Cys503/Cys508.

It localises to the secreted. Functionally, might have a role in sequestration of chitin oligosaccharides (breakdown products of fungal cell walls that are released during invasion and act as triggers of host immunity) to dampen host defense. This is LysM domain-containing protein ARB_03442 from Arthroderma benhamiae (strain ATCC MYA-4681 / CBS 112371) (Trichophyton mentagrophytes).